Consider the following 314-residue polypeptide: SERTA domain-containing protein 2 (314 aa).

Residues 33–80 enclose the SERTA domain; it reads YTLQRQTIFNISLMKLYNHRPLTEPSLQKTVLINNMLRRIQEELKQEG. Disordered stretches follow at residues 77 to 119 and 181 to 222; these read KQEG…HPCD and PTST…SKLM. Over residues 87 to 97 the composition is skewed to polar residues; the sequence is TPSSQPTTEPS. The segment covering 182 to 193 has biased composition (low complexity); that stretch reads TSTSTEAATAAT. Residues 210 to 221 are compositionally biased toward basic and acidic residues; the sequence is GPQESRADDSKL. The segment at 235 to 311 is required for transactivation activity; sequence TGFLTDLTLD…TELDHIMEVL (77 aa). The Nuclear export signal (NES) motif lies at 238 to 243; it reads LTDLTL.

Interacts with XPO1; which mediates nuclear export. Interacts with TFDP1; modulates transactivation activity of TFDP1/E2F complexes. In terms of processing, polyubiquitinated, which promotes proteasomal degradation. As to expression, expressed in adipose tissue.

It localises to the nucleus. The protein resides in the cytoplasm. Functionally, acts at E2F-responsive promoters as coregulator to integrate signals provided by PHD- and/or bromodomain-containing transcription factors. May act as coactivator as well as corepressor of E2F1-TFDP1 and E2F4-TFDP1 complexes on E2F consensus binding sites, which would activate or inhibit E2F-target genes expression. Modulates fat storage by down-regulating the expression of key genes involved in adipocyte lipolysis, thermogenesis and oxidative metabolism. The sequence is that of SERTA domain-containing protein 2 (SERTAD2) from Homo sapiens (Human).